The sequence spans 247 residues: MSKLFWAMLSFITRLPVPRRWSQGLDFEHYSRGIITFPLIGLLLGAISGLVFMVLQAWCGAPLAALFSVLVLVLMTGGFHLDGLADTCDGVFSARSRDRMLEIMRDSRLGTHGGLALIFVVLAKILVLSELALRGEPILASLAAACAISRGTAALLMYRHRYAREEGLGNVFIGKIDGRQTCVTLGLAAIFAAVLLPGMHGVAAMVVTMVAIFILGQLLKRTLGGQTGDTLGAAIELGELVFLLALL.

A run of 5 helical transmembrane segments spans residues 34-54 (IITF…VFMV), 59-79 (CGAP…TGGF), 113-133 (GGLA…ELAL), 138-158 (ILAS…LLMY), and 194-214 (VLLP…AIFI).

The protein belongs to the CobS family. It depends on Mg(2+) as a cofactor.

It is found in the cell inner membrane. The enzyme catalyses alpha-ribazole + adenosylcob(III)inamide-GDP = adenosylcob(III)alamin + GMP + H(+). It catalyses the reaction alpha-ribazole 5'-phosphate + adenosylcob(III)inamide-GDP = adenosylcob(III)alamin 5'-phosphate + GMP + H(+). Its pathway is cofactor biosynthesis; adenosylcobalamin biosynthesis; adenosylcobalamin from cob(II)yrinate a,c-diamide: step 7/7. Functionally, joins adenosylcobinamide-GDP and alpha-ribazole to generate adenosylcobalamin (Ado-cobalamin). Also synthesizes adenosylcobalamin 5'-phosphate from adenosylcobinamide-GDP and alpha-ribazole 5'-phosphate. This chain is Adenosylcobinamide-GDP ribazoletransferase, found in Escherichia coli O45:K1 (strain S88 / ExPEC).